Consider the following 644-residue polypeptide: MSSIIQLLPDHVANQIAAGEVVQRPASVVKELLENAVDAKATDIKLIIKDAGKSLVQVIDNGVGMTVTDARLCFARHATSKIRQAEDLFSLGTKGFRGEALASIAAIAHMEMKTKQEQDELGTHIVIEGSKFVSQEVAVLPKGTSFAVKNLFFNIPARRNFLKSDTVEFRHVMDEFQRVALAHPNIHFSFYHNGSELYNLPAAGYRQRIVGIMSGKTNEKLVPVNEDTEIISIQGFVCKPEFAKKNRGEQFFFVNDRFIKSGYLHHAVMAAYDGLLKDGSQPSYFLYLQVPPNTIDINIHPTKTEIKFDDEQALYAILRASIKHSLGQFNVAPVLDFDRDSNLDTPYHYKDVEAEVPTIQVDGTFNPFTDDKTNQHYTKAGSGSGSGYSSGSSSSSGSGSGSSYSGYSKRVEPTVSWESLYVGLDTENPETIESSPFIFENEEVTSSLFNDDEVEQASQKTYQIHKKYIVSPIKSGMVIVDQHRAHQRILYEQFLLNMTVNQASSQQLLFPLDLFYSSSEMKLIEELKPSLETTGFVFEEAQTDHVVISGIPVNITESEVSLVIEQLLSDLQDGIPASSYSQNDTIAKSMAKSLAVKTGSYLTEKEQDNLVNGLFACKDPNISPFQKPTFITMRVEDIDKKFAL.

Positions 363–405 (GTFNPFTDDKTNQHYTKAGSGSGSGYSSGSSSSSGSGSGSSYS) are disordered. Over residues 389-405 (SSGSSSSSGSGSGSSYS) the composition is skewed to low complexity.

Belongs to the DNA mismatch repair MutL/HexB family.

Functionally, this protein is involved in the repair of mismatches in DNA. It is required for dam-dependent methyl-directed DNA mismatch repair. May act as a 'molecular matchmaker', a protein that promotes the formation of a stable complex between two or more DNA-binding proteins in an ATP-dependent manner without itself being part of a final effector complex. The polypeptide is DNA mismatch repair protein MutL (Flavobacterium johnsoniae (strain ATCC 17061 / DSM 2064 / JCM 8514 / BCRC 14874 / CCUG 350202 / NBRC 14942 / NCIMB 11054 / UW101) (Cytophaga johnsonae)).